Consider the following 210-residue polypeptide: MVRDSIVVKGNREGLNVIIDMNKFQNFDEMLEIFIHKLSIGKKFYKGSTIIITTQLKEFNEKQISKFEEVLFEDFLIKDCIFKDIRETKNKVFTGVYEGRTKFYRRTLRSGQVINYPGNIVIVGDVNPGSEVYAGGNVIVIGNLCGEVHAGASGNTKAIIAAFKLQPSILQIANIMTRSPEDGPKPSYPEVARIKDGIIIVEPYLPNKFV.

Belongs to the MinC family. Interacts with MinD and FtsZ.

Its function is as follows. Cell division inhibitor that blocks the formation of polar Z ring septums. Rapidly oscillates between the poles of the cell to destabilize FtsZ filaments that have formed before they mature into polar Z rings. Prevents FtsZ polymerization. The protein is Probable septum site-determining protein MinC of Clostridium novyi (strain NT).